The sequence spans 91 residues: MATSAAAKDDDSPATRFAVDQLKSIIERIERLEEEKKAISEDIKDVYAESKGNGFDVKALRTIIRLRKQDPNERQEEESILETYMQALGMI.

Belongs to the UPF0335 family.

The sequence is that of UPF0335 protein BRADO1188 from Bradyrhizobium sp. (strain ORS 278).